The chain runs to 208 residues: Cytochrome c biogenesis ATP-binding export protein CcmA (208 aa).

Residues 3–206 (LSGKDLTAYR…LEKFLPPQEK (204 aa)) form the ABC transporter domain. Residue 35–42 (GPNGIGKS) participates in ATP binding.

The protein belongs to the ABC transporter superfamily. CcmA exporter (TC 3.A.1.107) family. In terms of assembly, the complex is composed of two ATP-binding proteins (CcmA) and two transmembrane proteins (CcmB).

It is found in the cell inner membrane. The enzyme catalyses heme b(in) + ATP + H2O = heme b(out) + ADP + phosphate + H(+). Functionally, part of the ABC transporter complex CcmAB involved in the biogenesis of c-type cytochromes; once thought to export heme, this seems not to be the case, but its exact role is uncertain. Responsible for energy coupling to the transport system. This chain is Cytochrome c biogenesis ATP-binding export protein CcmA, found in Bartonella henselae (strain ATCC 49882 / DSM 28221 / CCUG 30454 / Houston 1) (Rochalimaea henselae).